Reading from the N-terminus, the 294-residue chain is Protoheme IX farnesyltransferase (294 aa).

9 consecutive transmembrane segments (helical) span residues 24–44 (VVLL…PGWV), 48–68 (LIAF…AINH), 96–116 (ALWF…LFVN), 118–138 (LTAL…TGYL), 145–165 (NIVI…TAVT), 172–192 (ALLL…ALAI), 224–244 (VLLL…WIYL), 245–265 (LGAL…YFTD), and 268–288 (VVAM…FVFL).

The protein belongs to the UbiA prenyltransferase family. Protoheme IX farnesyltransferase subfamily.

The protein resides in the cell inner membrane. The catalysed reaction is heme b + (2E,6E)-farnesyl diphosphate + H2O = Fe(II)-heme o + diphosphate. The protein operates within porphyrin-containing compound metabolism; heme O biosynthesis; heme O from protoheme: step 1/1. Functionally, converts heme B (protoheme IX) to heme O by substitution of the vinyl group on carbon 2 of heme B porphyrin ring with a hydroxyethyl farnesyl side group. In Legionella pneumophila (strain Corby), this protein is Protoheme IX farnesyltransferase.